The primary structure comprises 632 residues: tRNA 5-methylaminomethyl-2-thiouridine biosynthesis bifunctional protein MnmC (632 aa).

A tRNA (mnm(5)s(2)U34)-methyltransferase region spans residues 1-247 (MNSRIFPAAM…KWHMTLGQRL (247 aa)). An FAD-dependent cmnm(5)s(2)U34 oxidoreductase region spans residues 267 to 632 (VGAGLAGAAV…TDLLAQIAPR (366 aa)).

In the N-terminal section; belongs to the methyltransferase superfamily. tRNA (mnm(5)s(2)U34)-methyltransferase family. This sequence in the C-terminal section; belongs to the DAO family. FAD serves as cofactor.

It localises to the cytoplasm. The catalysed reaction is 5-aminomethyl-2-thiouridine(34) in tRNA + S-adenosyl-L-methionine = 5-methylaminomethyl-2-thiouridine(34) in tRNA + S-adenosyl-L-homocysteine + H(+). In terms of biological role, catalyzes the last two steps in the biosynthesis of 5-methylaminomethyl-2-thiouridine (mnm(5)s(2)U) at the wobble position (U34) in tRNA. Catalyzes the FAD-dependent demodification of cmnm(5)s(2)U34 to nm(5)s(2)U34, followed by the transfer of a methyl group from S-adenosyl-L-methionine to nm(5)s(2)U34, to form mnm(5)s(2)U34. This is tRNA 5-methylaminomethyl-2-thiouridine biosynthesis bifunctional protein MnmC from Bordetella bronchiseptica (strain ATCC BAA-588 / NCTC 13252 / RB50) (Alcaligenes bronchisepticus).